Here is a 620-residue protein sequence, read N- to C-terminus: Glutathione-regulated potassium-efflux system protein KefC (620 aa).

The next 12 helical transmembrane spans lie at 4–24 (HTLIQALIYLGSAALIVPIAV), 26–46 (LGLGSVLGYLIAGCIIGPWGL), 54–74 (SILHFAEIGVVLMLFIIGLEL), 90–110 (GALQMVICGGLLGLFCMLLGL), 114–134 (VAELIGMTLALSSTAIAMQAM), 149–169 (FAVLLFQDIAAIPLVAMIPLL), 178–198 (MGAFALSALKVAGALVLVVLL), 218–238 (VFSAVALFLVFGFGLLLEEVG), 270–290 (GLLLGLFFIGVGMSIDFGTLI), 294–314 (LRIVILLLGFLIIKIAMLWLI), 327–347 (WFAVLLGQGSEFAFVVFGAAQ), and 359–379 (SLTLAVALSMAATPILLVILN). One can recognise an RCK N-terminal domain in the interval 399 to 518 (QPRVIIAGFG…AGVEKPERET (120 aa)). The interval 597–620 (GWQGTEEGKHTGNMADEPETKPSS) is disordered.

This sequence belongs to the monovalent cation:proton antiporter 2 (CPA2) transporter (TC 2.A.37) family. KefC subfamily. Homodimer. Interacts with the regulatory subunit KefF.

The protein resides in the cell inner membrane. Its function is as follows. Pore-forming subunit of a potassium efflux system that confers protection against electrophiles. Catalyzes K(+)/H(+) antiport. This chain is Glutathione-regulated potassium-efflux system protein KefC, found in Escherichia coli (strain SMS-3-5 / SECEC).